We begin with the raw amino-acid sequence, 239 residues long: tRNA (guanine-N(1)-)-methyltransferase (239 aa).

S-adenosyl-L-methionine is bound by residues Gly112 and 131 to 136 (LGDFIL).

Belongs to the RNA methyltransferase TrmD family. In terms of assembly, homodimer.

The protein localises to the cytoplasm. It carries out the reaction guanosine(37) in tRNA + S-adenosyl-L-methionine = N(1)-methylguanosine(37) in tRNA + S-adenosyl-L-homocysteine + H(+). Functionally, specifically methylates guanosine-37 in various tRNAs. The protein is tRNA (guanine-N(1)-)-methyltransferase of Clostridium tetani (strain Massachusetts / E88).